Consider the following 295-residue polypeptide: Ectoine dioxygenase (295 aa).

Glutamine 129 is an L-ectoine binding site. Residue lysine 135 participates in 2-oxoglutarate binding. Fe cation contacts are provided by histidine 146, aspartate 148, and histidine 247.

It belongs to the PhyH family. EctD subfamily. As to quaternary structure, homodimer. Requires Fe(2+) as cofactor.

The catalysed reaction is L-ectoine + 2-oxoglutarate + O2 = 5-hydroxyectoine + succinate + CO2. Functionally, involved in the biosynthesis of 5-hydroxyectoine, called compatible solute, which helps organisms to survive extreme osmotic stress by acting as a highly soluble organic osmolyte. Catalyzes the 2-oxoglutarate-dependent selective hydroxylation of L-ectoine to yield (4S,5S)-5-hydroxyectoine. The protein is Ectoine dioxygenase of Streptomyces avermitilis (strain ATCC 31267 / DSM 46492 / JCM 5070 / NBRC 14893 / NCIMB 12804 / NRRL 8165 / MA-4680).